The following is a 466-amino-acid chain: Soluble pyridine nucleotide transhydrogenase (466 aa).

36-45 provides a ligand contact to FAD; it reads ERYQNVGGGC.

Belongs to the class-I pyridine nucleotide-disulfide oxidoreductase family. It depends on FAD as a cofactor.

It is found in the cytoplasm. The enzyme catalyses NAD(+) + NADPH = NADH + NADP(+). Functionally, conversion of NADPH, generated by peripheral catabolic pathways, to NADH, which can enter the respiratory chain for energy generation. In Shigella boydii serotype 18 (strain CDC 3083-94 / BS512), this protein is Soluble pyridine nucleotide transhydrogenase.